Consider the following 195-residue polypeptide: UPF0215 protein TSIB_1161 (195 aa).

This sequence belongs to the UPF0215 family.

The polypeptide is UPF0215 protein TSIB_1161 (Thermococcus sibiricus (strain DSM 12597 / MM 739)).